Reading from the N-terminus, the 1167-residue chain is PH and Rap-GAP domain-containing protein DDB_G0271806 (1167 aa).

2 consecutive PH domains span residues 35–140 (NCVK…SSSL) and 165–257 (HVYL…SRIP). Residues 95–160 (GIDNNNCTNS…TNANTNNGLS (66 aa)) form a disordered region. The span at 98–155 (NNNCTNSNSNNNNNNSDLIHLSAPSLSSSTSSTISPISSSSSLTTTTTTTTTTTNANT) shows a compositional bias: low complexity. 3 disordered regions span residues 335 to 361 (SGGG…GGSL), 376 to 400 (WRFS…STQV), and 645 to 734 (YSRS…LEPE). Over residues 340–351 (NNSSPSSLQSQQ) the composition is skewed to low complexity. Residues 648-676 (SEPNLQSCLSSSPSTRETMVPSSPSSHQL) are compositionally biased toward polar residues. A compositionally biased stretch (low complexity) spans 687–732 (EQQLSSSSSSSSQQLQLQLQQQEQEQLLQEQPEAEQSQPEPQPQLE). One can recognise a Rap-GAP domain in the interval 950 to 1162 (LLSFEERQTT…RTRESLLNYY (213 aa)).

This chain is PH and Rap-GAP domain-containing protein DDB_G0271806, found in Dictyostelium discoideum (Social amoeba).